A 359-amino-acid polypeptide reads, in one-letter code: DNA replication and repair protein RecF (359 aa).

Residue 30-37 coordinates ATP; sequence GPNGSGKT.

The protein belongs to the RecF family.

The protein localises to the cytoplasm. Functionally, the RecF protein is involved in DNA metabolism; it is required for DNA replication and normal SOS inducibility. RecF binds preferentially to single-stranded, linear DNA. It also seems to bind ATP. The sequence is that of DNA replication and repair protein RecF from Psychromonas ingrahamii (strain DSM 17664 / CCUG 51855 / 37).